A 338-amino-acid chain; its full sequence is UDP-3-O-acylglucosamine N-acyltransferase (338 aa).

His243 (proton acceptor) is an active-site residue.

The protein belongs to the transferase hexapeptide repeat family. LpxD subfamily. Homotrimer.

It catalyses the reaction a UDP-3-O-[(3R)-3-hydroxyacyl]-alpha-D-glucosamine + a (3R)-hydroxyacyl-[ACP] = a UDP-2-N,3-O-bis[(3R)-3-hydroxyacyl]-alpha-D-glucosamine + holo-[ACP] + H(+). The protein operates within bacterial outer membrane biogenesis; LPS lipid A biosynthesis. In terms of biological role, catalyzes the N-acylation of UDP-3-O-acylglucosamine using 3-hydroxyacyl-ACP as the acyl donor. Is involved in the biosynthesis of lipid A, a phosphorylated glycolipid that anchors the lipopolysaccharide to the outer membrane of the cell. In Amoebophilus asiaticus (strain 5a2), this protein is UDP-3-O-acylglucosamine N-acyltransferase.